The chain runs to 88 residues: uncharacterized protein (88 aa).

Residues 34–54 (IIIAVILIFFLTIVGLFYLII) traverse the membrane as a helical segment.

Its subcellular location is the membrane. This is an uncharacterized protein from Ureaplasma parvum serovar 3 (strain ATCC 700970).